Here is a 391-residue protein sequence, read N- to C-terminus: UDP-galactose transporter homolog 1 (391 aa).

The next 5 membrane-spanning stretches (helical) occupy residues Leu3–Leu23, Leu52–Val72, Tyr126–Ile147, Tyr178–Pro198, and Ala207–Gly227. A glycan (N-linked (GlcNAc...) asparagine) is linked at Asn230. The next 4 helical transmembrane spans lie at Met250–Ile270, Asp298–Glu318, Leu323–Val343, and Glu347–Ala367.

Belongs to the nucleotide-sugar transporter family. SLC35B subfamily.

The protein resides in the endoplasmic reticulum membrane. Its function is as follows. May be involved in specific transport of UDP-Gal from the cytosol to the Golgi lumen. Involved in the maintenance of optimal conditions for the folding of secretory pathway proteins in the endoplasmic reticulum. This chain is UDP-galactose transporter homolog 1 (HUT1), found in Mycosarcoma maydis (Corn smut fungus).